Consider the following 622-residue polypeptide: Cell pattern formation-associated protein stuA (622 aa).

Disordered stretches follow at residues 1–24 (MASMNQPQPYMDVHSHLSSGQTYA) and 62–81 (YPNSVASSQSVPPPTTSISS). The HTH APSES-type domain occupies 129–235 (RVTATLWEDE…QHISNLLYHP (107 aa)). The segment at residues 163 to 184 (GTKLLNVAGMTRGRRDGILKSE) is a DNA-binding region (H-T-H motif). Disordered regions lie at residues 239–517 (NQRN…TPPR) and 549–622 (SNSG…SARR). Composition is skewed to polar residues over residues 274–283 (LQTPVPSHMS), 302–345 (ASAS…ARSM), and 355–370 (GNNLQGMQSYQPQSGY). Residues 384–395 (PQYAPQQPLPQQ) show a composition bias toward low complexity. Composition is skewed to polar residues over residues 404 to 421 (MPTSSYRDMAPPSSQRGS), 455 to 470 (SGYNTGRGSYYTTNPS), 480 to 506 (QLTPDMTGSPQQNGSGRMTPRTSNTAP), and 549 to 563 (SNSGYSTGMNGSMGS). The nuclear localization domain stretch occupies residues 565–590 (KRMRDDDDDRIVPPDSRGEFDTKRRK). Over residues 566–586 (RMRDDDDDRIVPPDSRGEFDT) the composition is skewed to basic and acidic residues.

The protein belongs to the EFG1/PHD1/stuA family.

It localises to the nucleus. Transcription factor that regulates asexual reproduction. Binds the StuA-response elements (StRE) with the consensus sequence 5'-(A/T)CGCG(T/A)N(A/C)-3' at the promoters of target genes. Required from the very earliest events of asexual reproduction until completion of conidiophore development, but is not specifically required for differentiation of conidia. Represses transcription of the abaA developmental regulatory gene and of the developmentally regulated awh11 gene. Controls the expression of the catalase-peroxidase gene cpeA. Plays an important role in cell wall biogenesis during the development by controlling the transcription level of fksA. The chain is Cell pattern formation-associated protein stuA from Emericella nidulans (strain FGSC A4 / ATCC 38163 / CBS 112.46 / NRRL 194 / M139) (Aspergillus nidulans).